The chain runs to 176 residues: Inner membrane-spanning protein YciB (176 aa).

The next 5 helical transmembrane spans lie at 23–43, 50–70, 74–94, 119–139, and 150–170; these read MIAATAVALVAGVVQAAFLYW, TMQWVGLVLIVVFGGATIVLG, FIMWKPSVLFWLGALFLWGSH, LTYMWVGFLIFMGIANWFVFT, and MFGSTALMLVFFIIQGIYLST.

Belongs to the YciB family.

It is found in the cell inner membrane. Its function is as follows. Plays a role in cell envelope biogenesis, maintenance of cell envelope integrity and membrane homeostasis. The protein is Inner membrane-spanning protein YciB of Neisseria meningitidis serogroup A / serotype 4A (strain DSM 15465 / Z2491).